A 430-amino-acid polypeptide reads, in one-letter code: 3-phosphoshikimate 1-carboxyvinyltransferase (430 aa).

3-phosphoshikimate-binding residues include Lys-25, Ser-26, and Arg-30. Phosphoenolpyruvate is bound at residue Lys-25. Gly-98 and Arg-126 together coordinate phosphoenolpyruvate. 3-phosphoshikimate-binding residues include Ser-169, Ser-170, Gln-171, Ser-198, Glu-313, and His-342. Gln-171 contributes to the phosphoenolpyruvate binding site. Residue Glu-313 is the Proton acceptor of the active site. Phosphoenolpyruvate-binding residues include Arg-346, Arg-387, and Lys-412.

Belongs to the EPSP synthase family. In terms of assembly, monomer.

The protein localises to the cytoplasm. The enzyme catalyses 3-phosphoshikimate + phosphoenolpyruvate = 5-O-(1-carboxyvinyl)-3-phosphoshikimate + phosphate. The protein operates within metabolic intermediate biosynthesis; chorismate biosynthesis; chorismate from D-erythrose 4-phosphate and phosphoenolpyruvate: step 6/7. Functionally, catalyzes the transfer of the enolpyruvyl moiety of phosphoenolpyruvate (PEP) to the 5-hydroxyl of shikimate-3-phosphate (S3P) to produce enolpyruvyl shikimate-3-phosphate and inorganic phosphate. This is 3-phosphoshikimate 1-carboxyvinyltransferase from Mycobacterium leprae (strain TN).